The sequence spans 377 residues: Cell division protein FtsZ (377 aa).

Acidic residues predominate over residues M1–G16. Positions M1 to T33 are disordered. Residues G57–N61, G144–G146, E175, R179, and D222 each bind GTP.

It belongs to the FtsZ family. As to quaternary structure, homodimer. Polymerizes to form a dynamic ring structure in a strictly GTP-dependent manner. Interacts directly with several other division proteins.

The protein resides in the cytoplasm. Its function is as follows. Essential cell division protein that forms a contractile ring structure (Z ring) at the future cell division site. The regulation of the ring assembly controls the timing and the location of cell division. One of the functions of the FtsZ ring is to recruit other cell division proteins to the septum to produce a new cell wall between the dividing cells. Binds GTP and shows GTPase activity. This Haloferax mediterranei (strain ATCC 33500 / DSM 1411 / JCM 8866 / NBRC 14739 / NCIMB 2177 / R-4) (Halobacterium mediterranei) protein is Cell division protein FtsZ.